The sequence spans 216 residues: Peroxiredoxin (216 aa).

The Thioredoxin domain maps to 2–158 (VVIGEKFPEV…ILRLVKALKV (157 aa)). Cysteine 46 (cysteine sulfenic acid (-SOH) intermediate) is an active-site residue. Residue arginine 121 participates in substrate binding. Cysteines 205 and 211 form a disulfide.

It belongs to the peroxiredoxin family. Prx6 subfamily. In terms of assembly, homodecamer. Pentamer of dimers that assemble into a ring structure.

Its subcellular location is the cytoplasm. It carries out the reaction a hydroperoxide + [thioredoxin]-dithiol = an alcohol + [thioredoxin]-disulfide + H2O. Functionally, thiol-specific peroxidase that catalyzes the reduction of hydrogen peroxide and organic hydroperoxides to water and alcohols, respectively. Plays a role in cell protection against oxidative stress by detoxifying peroxides. The polypeptide is Peroxiredoxin (Thermococcus kodakarensis (strain ATCC BAA-918 / JCM 12380 / KOD1) (Pyrococcus kodakaraensis (strain KOD1))).